Here is a 248-residue protein sequence, read N- to C-terminus: UDP-2,3-diacylglucosamine hydrolase (248 aa).

D7, H9, D40, N78, and H113 together coordinate Mn(2+). Residue 78-79 (NR) coordinates substrate. Residues D121, S159, T163, K166, and H194 each contribute to the substrate site. Positions 194 and 196 each coordinate Mn(2+).

It belongs to the LpxH family. Mn(2+) is required as a cofactor.

It localises to the cell inner membrane. The catalysed reaction is UDP-2-N,3-O-bis[(3R)-3-hydroxytetradecanoyl]-alpha-D-glucosamine + H2O = 2-N,3-O-bis[(3R)-3-hydroxytetradecanoyl]-alpha-D-glucosaminyl 1-phosphate + UMP + 2 H(+). The protein operates within glycolipid biosynthesis; lipid IV(A) biosynthesis; lipid IV(A) from (3R)-3-hydroxytetradecanoyl-[acyl-carrier-protein] and UDP-N-acetyl-alpha-D-glucosamine: step 4/6. Its function is as follows. Hydrolyzes the pyrophosphate bond of UDP-2,3-diacylglucosamine to yield 2,3-diacylglucosamine 1-phosphate (lipid X) and UMP by catalyzing the attack of water at the alpha-P atom. Involved in the biosynthesis of lipid A, a phosphorylated glycolipid that anchors the lipopolysaccharide to the outer membrane of the cell. This chain is UDP-2,3-diacylglucosamine hydrolase, found in Pseudomonas syringae pv. syringae (strain B728a).